The chain runs to 281 residues: Foldase protein PrsA (281 aa).

An N-terminal signal peptide occupies residues 1-18 (MKKWMMAAAVVSLMALSA). C19 carries N-palmitoyl cysteine lipidation. C19 carries the S-diacylglycerol cysteine lipid modification. The 91-residue stretch at 133–223 (KPKIRASHIL…YGYHIIKVTD (91 aa)) folds into the PpiC domain.

It belongs to the PrsA family.

It localises to the cell membrane. It carries out the reaction [protein]-peptidylproline (omega=180) = [protein]-peptidylproline (omega=0). Its function is as follows. Plays a major role in protein secretion by helping the post-translocational extracellular folding of several secreted proteins. This Geobacillus kaustophilus (strain HTA426) protein is Foldase protein PrsA.